The following is a 102-amino-acid chain: Small ribosomal subunit protein uS10 (102 aa).

It belongs to the universal ribosomal protein uS10 family. As to quaternary structure, part of the 30S ribosomal subunit.

Its function is as follows. Involved in the binding of tRNA to the ribosomes. This Syntrophus aciditrophicus (strain SB) protein is Small ribosomal subunit protein uS10.